The following is a 490-amino-acid chain: B3 domain-containing protein LOC_Os12g40080 (490 aa).

Residues 24–117 (GKSFIKVMIT…HFKVWIYDPS (94 aa)) constitute a DNA-binding region (TF-B3 1). The interval 161–191 (SGHSKETSEINPANSPSWKPTERVPSSEELD) is disordered. The span at 169–178 (EINPANSPSW) shows a compositional bias: polar residues. DNA-binding regions (TF-B3) lie at residues 236–331 (FYIT…FHPL) and 389–487 (VAVM…IRKS).

It is found in the nucleus. This chain is B3 domain-containing protein LOC_Os12g40080, found in Oryza sativa subsp. japonica (Rice).